The following is a 169-amino-acid chain: Protein-export protein SecB (169 aa).

Belongs to the SecB family. As to quaternary structure, homotetramer, a dimer of dimers. One homotetramer interacts with 1 SecA dimer.

It localises to the cytoplasm. In terms of biological role, one of the proteins required for the normal export of preproteins out of the cell cytoplasm. It is a molecular chaperone that binds to a subset of precursor proteins, maintaining them in a translocation-competent state. It also specifically binds to its receptor SecA. In Haemophilus influenzae (strain 86-028NP), this protein is Protein-export protein SecB.